The chain runs to 357 residues: Glutamine synthetase cytosolic isozyme 1-2 (357 aa).

One can recognise a GS beta-grasp domain in the interval 19 to 99 (IIAEYIWVGG…VMCDCYTPQG (81 aa)). One can recognise a GS catalytic domain in the interval 106–357 (KRHSAAKIFS…AETTLLWKQN (252 aa)).

The protein belongs to the glutamine synthetase family. In terms of assembly, homooctamer. As to expression, expressed in roots and at lower levels in leaf blades and spikelets (rice flower).

The protein localises to the cytoplasm. The enzyme catalyses L-glutamate + NH4(+) + ATP = L-glutamine + ADP + phosphate + H(+). Its function is as follows. High-affinity glutamine synthetase involved in ammonium assimilation. Plays an important role in the primary assimilation of ammonium taken up by roots. Plays a role in maintaining nitrogen metabolic balance during ammonium assimilation, thus controlling plant growth and development. Reassimilates ammonium generated during lignification within developing tillers, which is probably required for the outgrowth of axillary buds. Required for nitrogen-dependent biosynthesis of cytokinin. Active cytokinin in axillary bud meristem is required for axillary bud outgrowth and necessary for tillering. The protein is Glutamine synthetase cytosolic isozyme 1-2 of Oryza sativa subsp. japonica (Rice).